A 195-amino-acid chain; its full sequence is Pyruvoyl-dependent arginine decarboxylase AaxB (195 aa).

Position 53 is a pyruvic acid (Ser) (S53).

It belongs to the pyruvoyl-dependent arginine decarboxylase family. Trimer of an alpha-beta dimer. Requires pyruvate as cofactor.

The protein resides in the cytoplasm. The catalysed reaction is L-arginine + H(+) = agmatine + CO2. Its function is as follows. Part of the AaxABC system, catalyzes the decarboxylation of L-arginine. The arginine uptake by the bacterium in the macrophage may be a virulence factor against the host innate immune response. In Chlamydia trachomatis serovar L2 (strain ATCC VR-902B / DSM 19102 / 434/Bu), this protein is Pyruvoyl-dependent arginine decarboxylase AaxB (aaxB).